A 97-amino-acid chain; its full sequence is Co-chaperonin GroES (97 aa).

The protein belongs to the GroES chaperonin family. Heptamer of 7 subunits arranged in a ring. Interacts with the chaperonin GroEL.

It localises to the cytoplasm. In terms of biological role, together with the chaperonin GroEL, plays an essential role in assisting protein folding. The GroEL-GroES system forms a nano-cage that allows encapsulation of the non-native substrate proteins and provides a physical environment optimized to promote and accelerate protein folding. GroES binds to the apical surface of the GroEL ring, thereby capping the opening of the GroEL channel. This chain is Co-chaperonin GroES, found in Serratia proteamaculans (strain 568).